The primary structure comprises 412 residues: Peptidase T (412 aa).

A Zn(2+)-binding site is contributed by His78. The active site involves Asp80. Residue Asp140 participates in Zn(2+) binding. The active-site Proton acceptor is Glu174. Glu175, Asp197, and His379 together coordinate Zn(2+).

Belongs to the peptidase M20B family. It depends on Zn(2+) as a cofactor.

It is found in the cytoplasm. It carries out the reaction Release of the N-terminal residue from a tripeptide.. Cleaves the N-terminal amino acid of tripeptides. The protein is Peptidase T of Staphylococcus epidermidis (strain ATCC 12228 / FDA PCI 1200).